Reading from the N-terminus, the 353-residue chain is Phosphoribosylformylglycinamidine cyclo-ligase (353 aa).

It belongs to the AIR synthase family.

The protein localises to the cytoplasm. The catalysed reaction is 2-formamido-N(1)-(5-O-phospho-beta-D-ribosyl)acetamidine + ATP = 5-amino-1-(5-phospho-beta-D-ribosyl)imidazole + ADP + phosphate + H(+). It functions in the pathway purine metabolism; IMP biosynthesis via de novo pathway; 5-amino-1-(5-phospho-D-ribosyl)imidazole from N(2)-formyl-N(1)-(5-phospho-D-ribosyl)glycinamide: step 2/2. The chain is Phosphoribosylformylglycinamidine cyclo-ligase from Pseudomonas aeruginosa (strain ATCC 15692 / DSM 22644 / CIP 104116 / JCM 14847 / LMG 12228 / 1C / PRS 101 / PAO1).